We begin with the raw amino-acid sequence, 165 residues long: Small ribosomal subunit protein uS13 (165 aa).

The tract at residues 139–165 (GMTIGVARKKAAQPQSQQSSSQQQKSS) is disordered. The segment covering 153–165 (QSQQSSSQQQKSS) has biased composition (low complexity).

It belongs to the universal ribosomal protein uS13 family. Part of the 30S ribosomal subunit. Forms a loose heterodimer with protein S19. Forms two bridges to the 50S subunit in the 70S ribosome.

Located at the top of the head of the 30S subunit, it contacts several helices of the 16S rRNA. In the 70S ribosome it contacts the 23S rRNA (bridge B1a) and protein L5 of the 50S subunit (bridge B1b), connecting the 2 subunits; these bridges are implicated in subunit movement. The chain is Small ribosomal subunit protein uS13 from Saccharolobus solfataricus (strain ATCC 35092 / DSM 1617 / JCM 11322 / P2) (Sulfolobus solfataricus).